The primary structure comprises 261 residues: Glucosamine-6-phosphate deaminase (261 aa).

Asp-67 functions as the Proton acceptor; for enolization step in the catalytic mechanism. Asp-136 acts as the For ring-opening step in catalysis. Residue His-138 is the Proton acceptor; for ring-opening step of the active site. Catalysis depends on Glu-143, which acts as the For ring-opening step.

It belongs to the glucosamine/galactosamine-6-phosphate isomerase family. NagB subfamily.

It carries out the reaction alpha-D-glucosamine 6-phosphate + H2O = beta-D-fructose 6-phosphate + NH4(+). It participates in amino-sugar metabolism; N-acetylneuraminate degradation; D-fructose 6-phosphate from N-acetylneuraminate: step 5/5. In terms of biological role, catalyzes the reversible isomerization-deamination of glucosamine 6-phosphate (GlcN6P) to form fructose 6-phosphate (Fru6P) and ammonium ion. The chain is Glucosamine-6-phosphate deaminase from Streptomyces avermitilis (strain ATCC 31267 / DSM 46492 / JCM 5070 / NBRC 14893 / NCIMB 12804 / NRRL 8165 / MA-4680).